The primary structure comprises 322 residues: 6-deoxy-6-sulfo-D-fructose transketolase subunit SqwH (322 aa).

The protein belongs to the transketolase family. In terms of assembly, forms a complex with SqwG. It depends on thiamine diphosphate as a cofactor.

The catalysed reaction is 6-deoxy-6-sulfo-D-fructose + D-glyceraldehyde 3-phosphate = 4-deoxy-4-sulfo-D-erythrose + D-xylulose 5-phosphate. It carries out the reaction 4-deoxy-4-sulfo-D-erythrulose + D-glyceraldehyde 3-phosphate = sulfoacetaldehyde + D-xylulose 5-phosphate. Part of the sulfo-TK pathway, a D-sulfoquinovose degradation pathway that produces 2-hydroxyethane-1-sulfonate (isethionate). Catalyzes two steps of the pathway: the formation of 4-deoxy-4-sulfoerythrose (SE) and xylulose 5-phosphate from 6-deoxy-6-sulfo-D-fructose (SF) and glyceraldehyde 3-phosphate, and the formation of sulfoacetaldehyde (SA) and xylulose 5-phosphate from 4-deoxy-4-sulfo-D-erythrulose (SEu) and glyceraldehyde 3-phosphate. This is 6-deoxy-6-sulfo-D-fructose transketolase subunit SqwH from Clostridium sp. (strain MSTE9).